A 920-amino-acid polypeptide reads, in one-letter code: Rho GTPase-activating protein REN1 (920 aa).

Residues 1–10 (MANKNAESSS) are compositionally biased toward polar residues. Positions 1-64 (MANKNAESSS…SRGGNTVFKS (64 aa)) are disordered. The segment covering 17-31 (QPNQQQQQQPPIANE) has biased composition (low complexity). Residues 45–64 (PAQSGNTDSRSRGGNTVFKS) are compositionally biased toward polar residues. The 108-residue stretch at 60 to 167 (TVFKSGPLSI…WKAALENALT (108 aa)) folds into the PH domain. The Rho-GAP domain maps to 213-412 (LALEDVDGAP…TLLEEYESIF (200 aa)). Disordered regions lie at residues 417 to 592 (LSPG…NLSM), 719 to 825 (RLGH…ALSK), and 837 to 920 (RSQI…TFSR). A compositionally biased stretch (acidic residues) spans 434 to 463 (EGSDDEEYDDDDDGSQGSEDYTDEEEDLEN). Positions 464–473 (ESNGSYSESA) are enriched in polar residues. 3 stretches are compositionally biased toward basic and acidic residues: residues 475 to 491 (SEDK…HKIN), 499 to 509 (KSPKRSKEPKK), and 520 to 532 (PRHD…EDIV). Polar residues predominate over residues 555-568 (SSTSDVASDTQKPS). The segment covering 577-586 (SKRHWGRTPG) has biased composition (basic residues). Positions 598 to 728 (SVEVDEDNAD…RLGHHDGKAS (131 aa)) form a coiled coil. Composition is skewed to basic and acidic residues over residues 734 to 768 (ASKE…RSTS) and 776 to 788 (RENE…DSRS). Positions 814–825 (EGSTTTTSALSK) are enriched in low complexity. 2 stretches are compositionally biased toward polar residues: residues 854 to 864 (GQPSPTSGQNR) and 872 to 885 (GSGS…SKLQ). Positions 889-903 (ILDRGRSENGGDRGR) are enriched in basic and acidic residues. Residues 910-920 (HPNTTPRTFSR) show a composition bias toward polar residues.

In terms of assembly, interacts with ARAC11/ROP1. As to expression, expressed in pollen and pollen tubes.

The protein localises to the cell membrane. In terms of biological role, acts as a GTPase activator for the Rac-type GTPase by converting it to an inactive GDP-bound state. Maintains the global inactivation of ARAC11/ROP1 at the apex in pollen tubes in order to regulate the polar cell growth. This chain is Rho GTPase-activating protein REN1 (REN1), found in Arabidopsis thaliana (Mouse-ear cress).